Consider the following 173-residue polypeptide: Cytidylate kinase (173 aa).

Position 7–15 (7–15 (GLAGTGTST)) interacts with ATP.

It belongs to the cytidylate kinase family. Type 2 subfamily.

The protein localises to the cytoplasm. It catalyses the reaction CMP + ATP = CDP + ADP. It carries out the reaction dCMP + ATP = dCDP + ADP. The polypeptide is Cytidylate kinase (Methanosphaera stadtmanae (strain ATCC 43021 / DSM 3091 / JCM 11832 / MCB-3)).